We begin with the raw amino-acid sequence, 448 residues long: uncharacterized protein (448 aa).

257-264 is an ATP binding site; the sequence is GRNAQGKT.

This is an uncharacterized protein from Methanocaldococcus jannaschii (strain ATCC 43067 / DSM 2661 / JAL-1 / JCM 10045 / NBRC 100440) (Methanococcus jannaschii).